Reading from the N-terminus, the 869-residue chain is Bifunctional uridylyltransferase/uridylyl-removing enzyme (869 aa).

The tract at residues 1–332 is uridylyltransferase; sequence MTATPADRPD…QFDGEAVPVQ (332 aa). Residues 333-691 form a uridylyl-removing region; sequence LDAGFSLRRG…RRAVPDNDAL (359 aa). The HD domain maps to 450 to 572; it reads VDQHTLMVLR…VGTRERLDYL (123 aa). 2 ACT domains span residues 692 to 771 and 798 to 869; these read EVFV…PSRR and RISL…LDPT.

The protein belongs to the GlnD family. Mg(2+) serves as cofactor.

It carries out the reaction [protein-PII]-L-tyrosine + UTP = [protein-PII]-uridylyl-L-tyrosine + diphosphate. The catalysed reaction is [protein-PII]-uridylyl-L-tyrosine + H2O = [protein-PII]-L-tyrosine + UMP + H(+). Uridylyltransferase (UTase) activity is inhibited by glutamine, while glutamine activates uridylyl-removing (UR) activity. Its function is as follows. Modifies, by uridylylation and deuridylylation, the PII regulatory proteins (GlnB and homologs), in response to the nitrogen status of the cell that GlnD senses through the glutamine level. Under low glutamine levels, catalyzes the conversion of the PII proteins and UTP to PII-UMP and PPi, while under higher glutamine levels, GlnD hydrolyzes PII-UMP to PII and UMP (deuridylylation). Thus, controls uridylylation state and activity of the PII proteins, and plays an important role in the regulation of nitrogen assimilation and metabolism. This Xanthomonas campestris pv. campestris (strain 8004) protein is Bifunctional uridylyltransferase/uridylyl-removing enzyme.